The chain runs to 346 residues: Uroporphyrinogen decarboxylase (346 aa).

Residues Arg21–Arg25, Asp71, Tyr146, Ser201, and His316 contribute to the substrate site.

Belongs to the uroporphyrinogen decarboxylase family. In terms of assembly, homodimer.

It localises to the cytoplasm. The catalysed reaction is uroporphyrinogen III + 4 H(+) = coproporphyrinogen III + 4 CO2. The protein operates within porphyrin-containing compound metabolism; protoporphyrin-IX biosynthesis; coproporphyrinogen-III from 5-aminolevulinate: step 4/4. Its function is as follows. Catalyzes the decarboxylation of four acetate groups of uroporphyrinogen-III to yield coproporphyrinogen-III. This is Uroporphyrinogen decarboxylase from Rickettsia africae (strain ESF-5).